Here is a 240-residue protein sequence, read N- to C-terminus: Sugar fermentation stimulation protein homolog (240 aa).

Belongs to the SfsA family.

The chain is Sugar fermentation stimulation protein homolog from Saccharolobus islandicus (strain L.S.2.15 / Lassen #1) (Sulfolobus islandicus).